A 334-amino-acid chain; its full sequence is MIEADRLIQPQLQGQDDVVDRAMRPKLLDEYTGQDDTRAQLKVFIQAAKNRNEALDHMLIYGPPGLGKTTLAMIVANEMGVNIKSTSGPVLEKAGDLAALLTNLESGDVLFIDEIHRLSPVVEEILYPAMEDYQLDIMIGEGPAARSIKLDLPPFTLVGATTRAGALTSPLRARFGIPLRLEFYNIKDLSTIVTRSAQVMGLEIDTEGAFEIARRSRGTPRIANRLLRRVRDYAEVKHDGAITQFVADHALDLLDVDNEGFDYMDRKLMLAIIDKFMGGPVGLDNLAAAIGEERETIEDVLEPFLIQQGFIQRTPRGRIATARAYQHFQLIKPE.

Positions 4-184 (ADRLIQPQLQ…FGIPLRLEFY (181 aa)) are large ATPase domain (RuvB-L). Residues R24, G65, K68, T69, T70, 131 to 133 (EDY), R174, Y184, and R221 contribute to the ATP site. Residue T69 participates in Mg(2+) binding. The segment at 185–255 (NIKDLSTIVT…VADHALDLLD (71 aa)) is small ATPAse domain (RuvB-S). The segment at 258-334 (NEGFDYMDRK…YQHFQLIKPE (77 aa)) is head domain (RuvB-H). 3 residues coordinate DNA: R294, R313, and R318.

Belongs to the RuvB family. In terms of assembly, homohexamer. Forms an RuvA(8)-RuvB(12)-Holliday junction (HJ) complex. HJ DNA is sandwiched between 2 RuvA tetramers; dsDNA enters through RuvA and exits via RuvB. An RuvB hexamer assembles on each DNA strand where it exits the tetramer. Each RuvB hexamer is contacted by two RuvA subunits (via domain III) on 2 adjacent RuvB subunits; this complex drives branch migration. In the full resolvosome a probable DNA-RuvA(4)-RuvB(12)-RuvC(2) complex forms which resolves the HJ.

The protein localises to the cytoplasm. It carries out the reaction ATP + H2O = ADP + phosphate + H(+). Functionally, the RuvA-RuvB-RuvC complex processes Holliday junction (HJ) DNA during genetic recombination and DNA repair, while the RuvA-RuvB complex plays an important role in the rescue of blocked DNA replication forks via replication fork reversal (RFR). RuvA specifically binds to HJ cruciform DNA, conferring on it an open structure. The RuvB hexamer acts as an ATP-dependent pump, pulling dsDNA into and through the RuvAB complex. RuvB forms 2 homohexamers on either side of HJ DNA bound by 1 or 2 RuvA tetramers; 4 subunits per hexamer contact DNA at a time. Coordinated motions by a converter formed by DNA-disengaged RuvB subunits stimulates ATP hydrolysis and nucleotide exchange. Immobilization of the converter enables RuvB to convert the ATP-contained energy into a lever motion, pulling 2 nucleotides of DNA out of the RuvA tetramer per ATP hydrolyzed, thus driving DNA branch migration. The RuvB motors rotate together with the DNA substrate, which together with the progressing nucleotide cycle form the mechanistic basis for DNA recombination by continuous HJ branch migration. Branch migration allows RuvC to scan DNA until it finds its consensus sequence, where it cleaves and resolves cruciform DNA. The sequence is that of Holliday junction branch migration complex subunit RuvB from Shewanella putrefaciens (strain CN-32 / ATCC BAA-453).